The sequence spans 456 residues: 3-isopropylmalate dehydratase large subunit (456 aa).

Positions 336, 396, and 399 each coordinate [4Fe-4S] cluster.

The protein belongs to the aconitase/IPM isomerase family. LeuC type 1 subfamily. In terms of assembly, heterodimer of LeuC and LeuD. It depends on [4Fe-4S] cluster as a cofactor.

The enzyme catalyses (2R,3S)-3-isopropylmalate = (2S)-2-isopropylmalate. Its pathway is amino-acid biosynthesis; L-leucine biosynthesis; L-leucine from 3-methyl-2-oxobutanoate: step 2/4. Functionally, catalyzes the isomerization between 2-isopropylmalate and 3-isopropylmalate, via the formation of 2-isopropylmaleate. This is 3-isopropylmalate dehydratase large subunit from Staphylococcus epidermidis (strain ATCC 35984 / DSM 28319 / BCRC 17069 / CCUG 31568 / BM 3577 / RP62A).